The sequence spans 108 residues: Vacuolar ATPase assembly integral membrane protein VMA21 (108 aa).

The Cytoplasmic segment spans residues 1-34 (MASRRSAAAKKEDFSFEAAATQSAHEAQEGFPSS). Residues 35-55 (VIIKLVLVTVAMICAPLGTYF) traverse the membrane as a helical segment. Residues 56–68 (GTLNTICGGDSSY) are Lumenal-facing. The chain crosses the membrane as a helical span at residues 69-89 (AGALAAISVNVVLIIYLIIAA). The Cytoplasmic segment spans residues 90–108 (REDTGESEEERKGKEGKEE).

The protein belongs to the VMA21 family.

Its subcellular location is the endoplasmic reticulum membrane. The protein localises to the endoplasmic reticulum-Golgi intermediate compartment membrane. It localises to the cytoplasmic vesicle. It is found in the COPII-coated vesicle membrane. Its function is as follows. Required for the assembly of the V0 complex of the vacuolar ATPase (V-ATPase) in the endoplasmic reticulum. The polypeptide is Vacuolar ATPase assembly integral membrane protein VMA21 (Ajellomyces capsulatus (strain NAm1 / WU24) (Darling's disease fungus)).